The sequence spans 202 residues: MDTDSGDLSEGELSPGPEQFSSKSFAVQAQKKILSKMATKTMANMLIDDTSSEIFDELFKVTKEYVKNKKEAHKVLKDLVKVAVKVGILYRNKQFSLEELEIVENFRKKLNQTCMTAVSFFEVEYTFDKNVLSGLLHECKTLLHELVQRHLTPKSHSRIDRVFNHFADVEFLTALYSLEGNYRPYLKRICEGVNKLLDERVL.

Over residues M1–E10 the composition is skewed to acidic residues. A disordered region spans residues M1–S24.

This sequence belongs to the TNFAIP8 family.

The protein resides in the cytoplasm. Its subcellular location is the cell membrane. Its function is as follows. May act as a lipid transfer protein. The sequence is that of Tumor necrosis factor alpha-induced protein 8-like protein 3 (tnfaip8l3) from Xenopus laevis (African clawed frog).